A 370-amino-acid chain; its full sequence is MTASPKQRVVVGLSGGVDSAVTAYLLRQQGHEVVGIFMKNWEDDDDGGYCPSGTDFVDAAAVADVIGIEIEHVNFAADYKERVFAEFLREYQAGRTPNPDVLCNAEIKFKAFLDHALRLGAEKIATGHYAGVRRNPASGRFELLKGADPAKDQSYFLHRLDQRQLSRTLFPLGALRKTEVRRLAEDIGLPNARKKDSTGICFIGERPFREFLNRYIGPAPGPIEDDRGRVLGQHSGLSFYTLGQRQGLGIGGLKEQGAQRGGGAHAPWFVARKELATNTLRVVQGHDHPWLLSRALEAQDARWICGAAPAPGRYAAKTRYRQQDASCTMASAGQAGFRLHFSEEQWAVTPGQSAVLYDGNVCLGGGVIAG.

ATP is bound by residues 12–19 (GLSGGVDS) and Met-38. Positions 98-100 (NPD) are interaction with target base in tRNA. Cys-103 functions as the Nucleophile in the catalytic mechanism. A disulfide bridge connects residues Cys-103 and Cys-201. Gly-127 serves as a coordination point for ATP. The segment at 151 to 153 (KDQ) is interaction with tRNA. Residue Cys-201 is the Cysteine persulfide intermediate of the active site. The interval 319–320 (RY) is interaction with tRNA.

This sequence belongs to the MnmA/TRMU family.

The protein localises to the cytoplasm. The catalysed reaction is S-sulfanyl-L-cysteinyl-[protein] + uridine(34) in tRNA + AH2 + ATP = 2-thiouridine(34) in tRNA + L-cysteinyl-[protein] + A + AMP + diphosphate + H(+). Catalyzes the 2-thiolation of uridine at the wobble position (U34) of tRNA, leading to the formation of s(2)U34. This Verminephrobacter eiseniae (strain EF01-2) protein is tRNA-specific 2-thiouridylase MnmA.